Consider the following 207-residue polypeptide: Ribosomal RNA small subunit methyltransferase G (207 aa).

Residues Gly-73, Leu-78, 124 to 125, and Arg-139 contribute to the S-adenosyl-L-methionine site; that span reads VE.

This sequence belongs to the methyltransferase superfamily. RNA methyltransferase RsmG family.

It is found in the cytoplasm. The enzyme catalyses guanosine(527) in 16S rRNA + S-adenosyl-L-methionine = N(7)-methylguanosine(527) in 16S rRNA + S-adenosyl-L-homocysteine. Functionally, specifically methylates the N7 position of guanine in position 527 of 16S rRNA. In Escherichia coli O1:K1 / APEC, this protein is Ribosomal RNA small subunit methyltransferase G.